Here is a 198-residue protein sequence, read N- to C-terminus: Segregation and condensation protein B (198 aa).

Positions 167–198 (PKLADPEAEDPDQSEMDLFFDRFNQSKEQEEE) are disordered. The span at 172 to 181 (PEAEDPDQSE) shows a compositional bias: acidic residues.

The protein belongs to the ScpB family. In terms of assembly, homodimer. Homodimerization may be required to stabilize the binding of ScpA to the Smc head domains. Component of a cohesin-like complex composed of ScpA, ScpB and the Smc homodimer, in which ScpA and ScpB bind to the head domain of Smc. The presence of the three proteins is required for the association of the complex with DNA.

It is found in the cytoplasm. Participates in chromosomal partition during cell division. May act via the formation of a condensin-like complex containing Smc and ScpA that pull DNA away from mid-cell into both cell halves. This Listeria innocua serovar 6a (strain ATCC BAA-680 / CLIP 11262) protein is Segregation and condensation protein B.